Reading from the N-terminus, the 43-residue chain is Metallothionein-3 (43 aa).

This sequence belongs to the metallothionein superfamily. Type 5 family.

Its function is as follows. This protein binds cations of several transition elements. Thought to be involved in metal ion homeostasis. The protein is Metallothionein-3 (MtnC) of Drosophila melanogaster (Fruit fly).